We begin with the raw amino-acid sequence, 145 residues long: 3-dehydroquinate dehydratase (145 aa).

Residue Tyr23 is the Proton acceptor of the active site. Substrate contacts are provided by Asn74, His80, and Asp87. Catalysis depends on His100, which acts as the Proton donor. Substrate contacts are provided by residues 101-102 (IS) and Arg111.

This sequence belongs to the type-II 3-dehydroquinase family. As to quaternary structure, homododecamer.

It carries out the reaction 3-dehydroquinate = 3-dehydroshikimate + H2O. Its pathway is metabolic intermediate biosynthesis; chorismate biosynthesis; chorismate from D-erythrose 4-phosphate and phosphoenolpyruvate: step 3/7. Functionally, catalyzes a trans-dehydration via an enolate intermediate. The sequence is that of 3-dehydroquinate dehydratase from Mycobacterium leprae (strain Br4923).